The following is a 408-amino-acid chain: GPI transamidase component GAB1 homolog (408 aa).

10 helical membrane-spanning segments follow: residues 9–29 (LLGL…TWIA), 66–86 (VFYQ…LGGI), 88–108 (VTRF…YLIA), 125–145 (PLWI…GIAC), 149–169 (MILN…SYAI), 207–227 (IFVV…FFLN), 266–286 (FFLF…SIRL), 303–323 (LFKA…LPIF), 339–359 (AIVF…TLGC), and 370–390 (LILA…LLLV). The may be involved in recognition of long-chain fatty acids in GPI stretch occupies residues 247 to 267 (PNLGLWWYFFTEMFNEFRTFF).

This sequence belongs to the PIGU family. In terms of assembly, forms a complex with PIG-S homolog, PIG-T homolog and GPI8.

The protein resides in the endoplasmic reticulum membrane. It participates in glycolipid biosynthesis; glycosylphosphatidylinositol-anchor biosynthesis. Component of the GPI transamidase complex. May be involved in the recognition of either the GPI attachment signal or the lipid portion of GPI. In Schizosaccharomyces pombe (strain 972 / ATCC 24843) (Fission yeast), this protein is GPI transamidase component GAB1 homolog.